Consider the following 786-residue polypeptide: MNERALKVLEFYKIKEKLKGFVKTNAAKDIVDNLKPYTNLYEVEMHLEETMEALDLLQTKGEPPFEGVYDIRDILIRVEKAMVLLPGQLLKVASILKSSRRFKDYVGRKHEETPHKNIEDICEGIELLKGLEESIFNIVISDDEIADRASLKLYGIRRSLRDKNDSLRDRVNSLVRKYSPYLQESIYTIRGDRYVLPVRAEHKGSVPGLVHDQSSSGATLFIEPMSLVNLNNEIKELLLKEREEIERILEELSLKVYNNLDVVNVNAKVIWELDFIFAKAKFASHNNCTLPKVSEDGIVDIIEGKHPLIDTEKVVPTDIYLGKDFTSLIITGPNTGGKTVTLKTLGLIHIMGLSGLLIPAKENSTIAFFEEIFADIGDEQSIEQSLSTFSSHMVNIVDIISKADHKSLVLFDELGAGTDPTEGAALAISILENLRRRKCKIVATTHYSELKGYALKTEDVENASVEFDVETLRPTYRLLIGIPGKSNAFEISKRLGLGEDIIEEAKNNIESDSLKFEALIEKLQSKSIKASDDARRAEMYKLEADRLKDKYEDKLKIVEETREKLLKGAQEEAKKLIKEAKEEADEILKNIRELEKMGYSSTARQKLEEERKKLNSKIHKLEEKEENLNKEKGKKIKEINLGEEVYLPKLDQKVIILSKPDNRGEVQVQAGIMKINVKLDDLRLVDKPKEENKKGRKREAKLRMRTVESEIDLRGMDSMEAVYNTDKYLDEAYVAGLKEVTVIHGKGTGILRKSINDMLKRHPQVKNYRLGEYGEGGTGVTVVELK.

332 to 339 is a binding site for ATP; it reads GPNTGGKT. In terms of domain architecture, Smr spans 711-786; the sequence is IDLRGMDSME…GTGVTVVELK (76 aa).

Belongs to the DNA mismatch repair MutS family. MutS2 subfamily. In terms of assembly, homodimer. Binds to stalled ribosomes, contacting rRNA.

In terms of biological role, endonuclease that is involved in the suppression of homologous recombination and thus may have a key role in the control of bacterial genetic diversity. Functionally, acts as a ribosome collision sensor, splitting the ribosome into its 2 subunits. Detects stalled/collided 70S ribosomes which it binds and splits by an ATP-hydrolysis driven conformational change. Acts upstream of the ribosome quality control system (RQC), a ribosome-associated complex that mediates the extraction of incompletely synthesized nascent chains from stalled ribosomes and their subsequent degradation. Probably generates substrates for RQC. This is Endonuclease MutS2 from Clostridium tetani (strain Massachusetts / E88).